A 440-amino-acid chain; its full sequence is Putative F-box/LRR-repeat protein At5g15620 (440 aa).

Residues 1–52 (MDRFSNLPDDVIYHIVSFLSAKEATCLKFVSKNFQNLVTIKRNVVFHHWESF) enclose the F-box domain. LRR repeat units follow at residues 4-31 (FSNL…KFVS), 126-153 (LKLG…ILDS), 156-181 (FYAS…VIDR), 194-205 (SSPTLKRLTLRR), 210-235 (PEPE…KYKD), 264-289 (YWLN…SIKV), and 318-343 (EADF…TIEG).

The polypeptide is Putative F-box/LRR-repeat protein At5g15620 (Arabidopsis thaliana (Mouse-ear cress)).